The primary structure comprises 548 residues: Methyl-accepting chemotaxis protein HlyB (548 aa).

At 1 to 10 (MIINKFSLKW) the chain is on the cytoplasmic side. A helical membrane pass occupies residues 11 to 31 (MLAIAVAIPAIALLFVAFTSL). At 32 to 199 (NTMSVMQAQS…SFEAGRTKQM (168 aa)) the chain is on the periplasmic side. A helical membrane pass occupies residues 200 to 220 (VIIAAGLIISFITSLVIITNL). The 54-residue stretch at 218 to 271 (TNLRSRVAYLKDRMSSAAANLSLRTRLELDGNDELCDIGKSFNAFIDKVHHSIE) folds into the HAMP domain. Residues 221–548 (RSRVAYLKDR…LDKLVGSFEL (328 aa)) are Cytoplasmic-facing. Positions 276-512 (NSKELATMAS…DINRNVEDIN (237 aa)) constitute a Methyl-accepting transducer domain.

It belongs to the methyl-accepting chemotaxis (MCP) protein family.

The protein localises to the cell inner membrane. In terms of biological role, chemotactic-signal transducers respond to changes in the concentration of attractants and repellents in the environment, transduce a signal from the outside to the inside of the cell, and facilitate sensory adaptation through the variation of the level of methylation. The sequence is that of Methyl-accepting chemotaxis protein HlyB (hlyB) from Vibrio cholerae serotype O1 (strain ATCC 39315 / El Tor Inaba N16961).